A 60-amino-acid polypeptide reads, in one-letter code: Large ribosomal subunit protein uL30 (60 aa).

The protein belongs to the universal ribosomal protein uL30 family. Part of the 50S ribosomal subunit.

This chain is Large ribosomal subunit protein uL30, found in Dehalococcoides mccartyi (strain ATCC BAA-2100 / JCM 16839 / KCTC 5957 / BAV1).